Consider the following 113-residue polypeptide: N(2)-fixation sustaining protein CowN (113 aa).

It belongs to the CowN family.

Its function is as follows. Is required to sustain N(2)-dependent growth in the presence of low levels of carbon monoxide (CO). Probably acts by protecting the N(2) fixation ability of the nitrogenase complex, which is inactivated in the presence of CO. The polypeptide is N(2)-fixation sustaining protein CowN (Wolinella succinogenes (strain ATCC 29543 / DSM 1740 / CCUG 13145 / JCM 31913 / LMG 7466 / NCTC 11488 / FDC 602W) (Vibrio succinogenes)).